We begin with the raw amino-acid sequence, 408 residues long: Succinylornithine transaminase (408 aa).

Lys-252 carries the N6-(pyridoxal phosphate)lysine modification.

It belongs to the class-III pyridoxal-phosphate-dependent aminotransferase family. AstC subfamily. The cofactor is pyridoxal 5'-phosphate.

The enzyme catalyses N(2)-succinyl-L-ornithine + 2-oxoglutarate = N-succinyl-L-glutamate 5-semialdehyde + L-glutamate. Its pathway is amino-acid degradation; L-arginine degradation via AST pathway; L-glutamate and succinate from L-arginine: step 3/5. In terms of biological role, catalyzes the transamination of N(2)-succinylornithine and alpha-ketoglutarate into N(2)-succinylglutamate semialdehyde and glutamate. Can also act as an acetylornithine aminotransferase. The sequence is that of Succinylornithine transaminase from Salmonella choleraesuis (strain SC-B67).